Reading from the N-terminus, the 324-residue chain is Probable pectinesterase A (324 aa).

Residues 1 to 19 (MHGSLLKLALLSFSLGSSA) form the signal peptide. Glutamine 142 lines the substrate pocket. Catalysis depends on aspartate 165, which acts as the Proton donor. Catalysis depends on aspartate 186, which acts as the Nucleophile. Substrate contacts are provided by arginine 246 and tryptophan 248. A glycan (N-linked (GlcNAc...) asparagine) is linked at asparagine 285.

It belongs to the pectinesterase family.

It is found in the secreted. The catalysed reaction is [(1-&gt;4)-alpha-D-galacturonosyl methyl ester](n) + n H2O = [(1-&gt;4)-alpha-D-galacturonosyl](n) + n methanol + n H(+). It participates in glycan metabolism; pectin degradation; 2-dehydro-3-deoxy-D-gluconate from pectin: step 1/5. Involved in maceration and soft-rotting of plant tissue. This is Probable pectinesterase A (pmeA) from Aspergillus oryzae (strain ATCC 42149 / RIB 40) (Yellow koji mold).